Reading from the N-terminus, the 223-residue chain is Uracil-DNA glycosylase (223 aa).

D67 acts as the Proton acceptor in catalysis.

It belongs to the uracil-DNA glycosylase (UDG) superfamily. UNG family.

The protein resides in the cytoplasm. It carries out the reaction Hydrolyzes single-stranded DNA or mismatched double-stranded DNA and polynucleotides, releasing free uracil.. Functionally, excises uracil residues from the DNA which can arise as a result of misincorporation of dUMP residues by DNA polymerase or due to deamination of cytosine. The sequence is that of Uracil-DNA glycosylase from Borrelia turicatae (strain 91E135).